The following is a 312-amino-acid chain: Olfactory receptor 51A7 (312 aa).

At Met1 to Ile25 the chain is on the extracellular side. Residue Asn5 is glycosylated (N-linked (GlcNAc...) asparagine). The helical transmembrane segment at Trp26 to Leu46 threads the bilayer. Topologically, residues Phe47 to Ser54 are cytoplasmic. A helical membrane pass occupies residues Leu55–Leu75. Residues Ser76–Ala99 are Extracellular-facing. An intrachain disulfide couples Cys97 to Cys189. Residues Gln100–Leu120 form a helical membrane-spanning segment. The Cytoplasmic segment spans residues Asp121–Asn139. The helical transmembrane segment at Arg140 to Pro160 threads the bilayer. Residues Phe161–Val196 are Extracellular-facing. Residue Asn192 is glycosylated (N-linked (GlcNAc...) asparagine). A helical transmembrane segment spans residues Ile197–Ser216. Residues Tyr217–Ala236 lie on the Cytoplasmic side of the membrane. The helical transmembrane segment at Leu237–Leu257 threads the bilayer. Residues Ala258 to Val272 lie on the Extracellular side of the membrane. The helical transmembrane segment at Ile273–Val293 threads the bilayer. Over Lys294 to Arg312 the chain is Cytoplasmic.

Belongs to the G-protein coupled receptor 1 family.

It is found in the cell membrane. Its function is as follows. Odorant receptor. The polypeptide is Olfactory receptor 51A7 (OR51A7) (Homo sapiens (Human)).